Reading from the N-terminus, the 936-residue chain is Myocardin-related transcription factor A (936 aa).

3 RPEL repeats span residues 15-40 (TVLQLKLQQRRTREELENQGIMPPLK), 59-84 (DYLKRKIRSRPERAELVRMHILEETS), and 103-128 (DDLNEKISQRPGPMELVVKNILPVET). Positions 62-100 (KRKIRSRPERAELVRMHILEETSAEPSLQAKQIKLKRAR) match the Bipartite Nuclear localization signal motif. Disordered regions lie at residues 146-185 (SSFDEDSSDALSPEQPASQESQGSIPSPIENRPSETTQIP), 234-258 (SQPKPSFEKSQRIKKPKEPKPKVKK), and 401-422 (SQDPSTATAASAKPTPVQQAKP). A compositionally biased stretch (polar residues) spans 160 to 170 (QPASQESQGSI). A compositionally biased stretch (basic and acidic residues) spans 239–254 (SFEKSQRIKKPKEPKP). Residues 368 to 402 (LDEMKVAELKLELKHRGLPVSGTKIDLIERLKASQ) enclose the SAP domain. Low complexity predominate over residues 404 to 416 (PSTATAASAKPTP). A coiled-coil region spans residues 497–542 (DARDKDLMLREKDRQIEELTQRLKQKQELVERLRQQLEQEKRTPQH). The segment at 707-755 (HNESPATPPQQPEPEPPPHSIFLTHSSPQWSKNPPGYDEAMKQQPNSCE) is disordered. Residues 712–725 (ATPPQQPEPEPPPH) are compositionally biased toward pro residues. Positions 729 to 738 (LTHSSPQWSK) are enriched in polar residues.

In terms of assembly, interacts with srf, forming the srf-mrtfa nuclear complex which binds the 5'-CArG-3' consensus motif (CArG box) on DNA via srf. Interacts (via RPEL repeats) with globular actin (G-actin), thereby regulating its subcellular location and activity of the complex formed with srf.

The protein resides in the cytoplasm. It localises to the nucleus. In terms of biological role, transcription coactivator that associates with the serum response factor (srf) transcription factor to control expression of genes regulating the cytoskeleton during development, morphogenesis and cell migration. The srf-mrtfa complex activity responds to Rho GTPase-induced changes in cellular globular actin (G-actin) concentration, thereby coupling cytoskeletal gene expression to cytoskeletal dynamics. Mrtfa binds G-actin via its RPEL repeats, regulating activity of the mrtfa-srf complex. Activity is also regulated by filamentous actin (F-actin) in the nucleus. The sequence is that of Myocardin-related transcription factor A (mrtfa) from Xenopus laevis (African clawed frog).